A 168-amino-acid polypeptide reads, in one-letter code: Large ribosomal subunit protein uL10 (168 aa).

Belongs to the universal ribosomal protein uL10 family. In terms of assembly, part of the ribosomal stalk of the 50S ribosomal subunit. The N-terminus interacts with L11 and the large rRNA to form the base of the stalk. The C-terminus forms an elongated spine to which L12 dimers bind in a sequential fashion forming a multimeric L10(L12)X complex.

Its function is as follows. Forms part of the ribosomal stalk, playing a central role in the interaction of the ribosome with GTP-bound translation factors. This chain is Large ribosomal subunit protein uL10, found in Pediococcus pentosaceus (strain ATCC 25745 / CCUG 21536 / LMG 10740 / 183-1w).